The sequence spans 515 residues: Probable multifunctional siroheme biosynthesis protein HemA (515 aa).

NAD(+) is bound by residues 26-27 (SL) and 47-48 (IR). The segment at 26 to 174 (SLDYKSAAID…TAAKKAKTEI (149 aa)) is glutamyl-tRNA reductase. L-glutamyl-tRNA(Glu) is bound by residues 68-71 (TCNR), S127, E132, and Q138. C69 acts as the Nucleophile in catalysis. Residue 206 to 211 (GNGEIG) participates in NADP(+) binding. The tract at residues 367 to 507 (FPLFIDLSGK…SLVKSVAEQI (141 aa)) is precorrin-2 dehydrogenase /sirohydrochlorin ferrochelatase.

This sequence in the N-terminal section; belongs to the glutamyl-tRNA reductase family. The protein in the C-terminal section; belongs to the precorrin-2 dehydrogenase / sirohydrochlorin ferrochelatase family. Homodimer.

The enzyme catalyses (S)-4-amino-5-oxopentanoate + tRNA(Glu) + NADP(+) = L-glutamyl-tRNA(Glu) + NADPH + H(+). The catalysed reaction is precorrin-2 + NAD(+) = sirohydrochlorin + NADH + 2 H(+). It catalyses the reaction siroheme + 2 H(+) = sirohydrochlorin + Fe(2+). It participates in cofactor biosynthesis; adenosylcobalamin biosynthesis; sirohydrochlorin from precorrin-2: step 1/1. It functions in the pathway porphyrin-containing compound metabolism; siroheme biosynthesis; siroheme from sirohydrochlorin: step 1/1. Its pathway is porphyrin-containing compound metabolism; siroheme biosynthesis; sirohydrochlorin from precorrin-2: step 1/1. The protein operates within porphyrin-containing compound metabolism; protoporphyrin-IX biosynthesis; 5-aminolevulinate from L-glutamyl-tRNA(Glu): step 1/2. Its function is as follows. Multifunctional enzyme that catalyzes the NADPH-dependent reduction of glutamyl-tRNA(Glu) to glutamate 1-semialdehyde (GSA), the NAD-dependent ring dehydrogenation of precorrin-2 to sirohydrochlorin and finally, the ferrochelation of sirohydrochlorin to yield siroheme. This chain is Probable multifunctional siroheme biosynthesis protein HemA, found in Ruminiclostridium josui (Clostridium josui).